We begin with the raw amino-acid sequence, 410 residues long: Multifunctional CCA protein (410 aa).

The ATP site is built by glycine 8 and arginine 11. CTP-binding residues include glycine 8 and arginine 11. Mg(2+) contacts are provided by aspartate 21 and aspartate 23. Residues arginine 91, arginine 143, and arginine 146 each coordinate ATP. CTP contacts are provided by arginine 91, arginine 143, and arginine 146. One can recognise an HD domain in the interval 232–333; sequence TGVHVMMVVD…VRLLERSDAI (102 aa).

It belongs to the tRNA nucleotidyltransferase/poly(A) polymerase family. Bacterial CCA-adding enzyme type 1 subfamily. In terms of assembly, monomer. Can also form homodimers and oligomers. It depends on Mg(2+) as a cofactor. Requires Ni(2+) as cofactor.

It carries out the reaction a tRNA precursor + 2 CTP + ATP = a tRNA with a 3' CCA end + 3 diphosphate. It catalyses the reaction a tRNA with a 3' CCA end + 2 CTP + ATP = a tRNA with a 3' CCACCA end + 3 diphosphate. Catalyzes the addition and repair of the essential 3'-terminal CCA sequence in tRNAs without using a nucleic acid template. Adds these three nucleotides in the order of C, C, and A to the tRNA nucleotide-73, using CTP and ATP as substrates and producing inorganic pyrophosphate. tRNA 3'-terminal CCA addition is required both for tRNA processing and repair. Also involved in tRNA surveillance by mediating tandem CCA addition to generate a CCACCA at the 3' terminus of unstable tRNAs. While stable tRNAs receive only 3'-terminal CCA, unstable tRNAs are marked with CCACCA and rapidly degraded. The chain is Multifunctional CCA protein from Paraburkholderia phytofirmans (strain DSM 17436 / LMG 22146 / PsJN) (Burkholderia phytofirmans).